The chain runs to 130 residues: Small ribosomal subunit protein uS9 (130 aa).

Belongs to the universal ribosomal protein uS9 family.

The chain is Small ribosomal subunit protein uS9 from Saccharophagus degradans (strain 2-40 / ATCC 43961 / DSM 17024).